Reading from the N-terminus, the 1404-residue chain is ABC transporter G family member 47 (1404 aa).

Residues 156–423 enclose the ABC transporter 1 domain; it reads GNALHITRKK…FQSIGFKCPE (268 aa). 189-196 contacts ATP; the sequence is GPPGSGKT. Positions 501–714 constitute an ABC transmembrane type-2 1 domain; the sequence is ELLQANIDRE…ALNTLAVNEF (214 aa). A run of 7 helical transmembrane segments spans residues 519-539, 565-585, 607-627, 638-658, 663-683, 692-712, and 751-771; these read FLYIFQAIRLTVMAINTMTVF, MIMFNGLAEMGLAIAKLPVFF, TPISFLNTIVWVFLTYYVIGF, FLALFVMSEATSGLFRFIASL, VVASTMGSSCILISMLSSGFI, WWIWGYWISPLMYALNTLAVN, and VGALLGYVILLNVLYTICLIF. Positions 808 to 1059 constitute an ABC transporter 2 domain; the sequence is ITFEDIKYSI…ELIRYFEAIE (252 aa). 852-859 contributes to the ATP binding site; it reads GVSGAGKT. The 215-residue stretch at 1132–1346 folds into the ABC transmembrane type-2 2 domain; sequence TQCLACLWKQ…TLNGLVTSQF (215 aa). The next 7 helical transmembrane spans lie at 1152–1172, 1183–1199, 1239–1259, 1266–1286, 1298–1318, 1321–1341, and 1373–1393; these read IAVKYFFTIIVALLFGTMFWG, LFSAMGSMYSTCLTMGV, LPYIFLQTIIYGMLVYAMIGY, FFWYLFFMYFTLSYYTFYGMM, TVVSTGFYTMWNLFSGFLIPL, IPIWWRWYYWICPVAWTLNGL, and LLWVPAMVVVSFAVLFAFLFG.

The protein belongs to the ABC transporter superfamily. ABCG family. PDR (TC 3.A.1.205) subfamily.

The protein localises to the membrane. Its function is as follows. May be a general defense protein. This chain is ABC transporter G family member 47, found in Oryza sativa subsp. japonica (Rice).